We begin with the raw amino-acid sequence, 1066 residues long: DNA-directed RNA polymerase subunit beta (1066 aa).

The protein belongs to the RNA polymerase beta chain family. In terms of assembly, in plastids the minimal PEP RNA polymerase catalytic core is composed of four subunits: alpha, beta, beta', and beta''. When a (nuclear-encoded) sigma factor is associated with the core the holoenzyme is formed, which can initiate transcription.

The protein localises to the plastid. Its subcellular location is the chloroplast. The catalysed reaction is RNA(n) + a ribonucleoside 5'-triphosphate = RNA(n+1) + diphosphate. Functionally, DNA-dependent RNA polymerase catalyzes the transcription of DNA into RNA using the four ribonucleoside triphosphates as substrates. The sequence is that of DNA-directed RNA polymerase subunit beta from Psilotum nudum (Whisk fern).